Here is a 136-residue protein sequence, read N- to C-terminus: Large ribosomal subunit protein uL16c (136 aa).

Belongs to the universal ribosomal protein uL16 family. Part of the 50S ribosomal subunit.

Its subcellular location is the plastid. It is found in the chloroplast. This chain is Large ribosomal subunit protein uL16c, found in Buxus microphylla (Littleleaf boxwood).